Consider the following 509-residue polypeptide: MDEDKGIDSKESGEYEDDFEKDLEWLINDKEKSNGSMIEVACKKEDDLDQELKEKETETELGPQLSDPDKPPKDEALPRRNDFISVPSIQPLDPISDSDSENSFQDSKPENQKDLEDEEDEEVRRYIMEKIIEANKLLQTQEPVNDKRERKLKFKDKLVDLEVPPLEDSDTCKVLLENETNMSGKLSQLCISGDLGQESMLMSVTNGGCEENDRKILVERDGKFELMNLQDIESQGFLPPISSANGMEHESSQLPLRSANLSVGGIKKEEPEAKIHIMTLSQAGEPLAQVPQPPANPKNRPSSAANPDLNKKTRRSSHRIQSAGVSPVTSTYCLSPRQKELQKQLERKRERLKREEEQRKLEEENEKKKENEMVFKAWLQKKREQVVEMRRVQRAKQIEDMSSRQVNRDPQQAFRLWLKKKHEEQMKERKTEELRKQEECLFFLRGTEGRERAFRQWLRRKQIEKIAEQQAVKERARQLRLEARRSKQLQSGLYSVPEAKAFRFTDHYN.

2 disordered regions span residues 27 to 122 (INDK…EDEE) and 287 to 368 (LAQV…NEKK). 2 stretches are compositionally biased toward basic and acidic residues: residues 41–58 (ACKK…KETE) and 67–82 (DPDK…RRND). Polar residues predominate over residues 319-333 (RIQSAGVSPVTSTYC). 2 coiled-coil regions span residues 335 to 377 (SPRQ…VFKA) and 418 to 488 (LKKK…RSKQ). The span at 337–368 (RQKELQKQLERKRERLKREEEQRKLEEENEKK) shows a compositional bias: basic and acidic residues.

This sequence belongs to the CCDC181 family. As to quaternary structure, homodimer. Interacts with HOOK1. Interacts with HOOK2. Interacts with HOOK3.

Its subcellular location is the cytoplasm. It is found in the cytoskeleton. The protein localises to the cell projection. It localises to the cilium. The protein resides in the flagellum. Microtubule-binding protein that localizes to the microtubular manchette of elongating spermatids. The polypeptide is Coiled-coil domain-containing protein 181 (Rattus norvegicus (Rat)).